A 236-amino-acid polypeptide reads, in one-letter code: Glycosylphosphatidylinositol anchor biosynthesis protein 11 (236 aa).

2 consecutive transmembrane segments (helical) span residues 40-60 and 65-85; these read TLTI…FGLT and GVML…GYLI. N-linked (GlcNAc...) asparagine glycosylation is present at N99. 4 consecutive transmembrane segments (helical) span residues 107 to 127, 139 to 159, 184 to 204, and 215 to 235; these read LLAG…VALI, ETYL…LVLY, ILLS…PIPL, and ITLL…CFLF.

This sequence belongs to the PIGF family.

It is found in the endoplasmic reticulum membrane. It functions in the pathway glycolipid biosynthesis; glycosylphosphatidylinositol-anchor biosynthesis. Acts in the GPI biosynthetic pathway between GlcNAc-PI synthesis and GPI transfer to protein. This is Glycosylphosphatidylinositol anchor biosynthesis protein 11 (GPI11) from Debaryomyces hansenii (strain ATCC 36239 / CBS 767 / BCRC 21394 / JCM 1990 / NBRC 0083 / IGC 2968) (Yeast).